The primary structure comprises 1155 residues: Alpha,alpha-trehalose-phosphate synthase [UDP-forming] 1 (1155 aa).

The disordered stretch occupies residues 56–94; it reads LQRRRSVSSRGGSLRGSMDSLNDSGQNGAEDVIGVEDEE. The span at 63–72 shows a compositional bias: low complexity; it reads SSRGGSLRGS.

In the N-terminal section; belongs to the glycosyltransferase 20 family. The protein in the C-terminal section; belongs to the gob-1 trehalose phosphatase family.

The enzyme catalyses D-glucose 6-phosphate + UDP-alpha-D-glucose = alpha,alpha-trehalose 6-phosphate + UDP + H(+). Catalyzes the production of trehalose from glucose-6-phosphate and UDP-alpha-D-glucose in a 2 step process. The chain is Alpha,alpha-trehalose-phosphate synthase [UDP-forming] 1 (tps-1) from Aphelenchoides avenae (Mycophagous nematode worm).